Consider the following 398-residue polypeptide: tRNA-specific 2-thiouridylase MnmA (398 aa).

ATP contacts are provided by residues 19-26 and Leu45; that span reads AMSGGVDS. Catalysis depends on Cys113, which acts as the Nucleophile. Cys113 and Cys210 form a disulfide bridge. Gly137 is a binding site for ATP. The tract at residues 160-162 is interaction with tRNA; that stretch reads RDQ. Cys210 functions as the Cysteine persulfide intermediate in the catalytic mechanism.

Belongs to the MnmA/TRMU family.

It is found in the cytoplasm. It catalyses the reaction S-sulfanyl-L-cysteinyl-[protein] + uridine(34) in tRNA + AH2 + ATP = 2-thiouridine(34) in tRNA + L-cysteinyl-[protein] + A + AMP + diphosphate + H(+). Catalyzes the 2-thiolation of uridine at the wobble position (U34) of tRNA, leading to the formation of s(2)U34. The sequence is that of tRNA-specific 2-thiouridylase MnmA from Rhodopseudomonas palustris (strain HaA2).